Reading from the N-terminus, the 284-residue chain is Spermidine/putrescine transport system permease protein PotC homolog (284 aa).

The next 6 membrane-spanning stretches (helical) occupy residues 13–33, 76–96, 116–136, 143–163, 189–209, and 242–262; these read YFFL…LVSL, IIIG…SAFA, LATP…NTWL, GFFT…LILI, FFHI…LVVF, and AWAI…VCLI. The ABC transmembrane type-1 domain occupies 72-263; sequence LINSIIIGVI…ISVLGVCLIT (192 aa).

The protein belongs to the binding-protein-dependent transport system permease family. CysTW subfamily.

It is found in the cell membrane. Required for the activity of the bacterial transport system of putrescine and spermidine. The protein is Spermidine/putrescine transport system permease protein PotC homolog (potC) of Mycoplasma genitalium (strain ATCC 33530 / DSM 19775 / NCTC 10195 / G37) (Mycoplasmoides genitalium).